We begin with the raw amino-acid sequence, 602 residues long: ATP-dependent lipid A-core flippase 1 (602 aa).

Helical transmembrane passes span 36–56, 80–100, 154–174, 176–196, and 261–281; these read LGFV…VYFL, LFII…NYCL, ILTI…MFYY, WQLS…VSVV, and ASVP…FYAI. The ABC transmembrane type-1 domain maps to 39–321; that stretch reads VAAIIGMLGY…LTNVNSEFQQ (283 aa). Positions 362–599 constitute an ABC transporter domain; sequence YKNTNTMTTS…QGAYAQLHSF (238 aa). ATP is bound at residue 398-405; the sequence is GRSGSGKS.

Belongs to the ABC transporter superfamily. Lipid exporter (TC 3.A.1.106) family. As to quaternary structure, homodimer.

The protein localises to the cell inner membrane. The enzyme catalyses ATP + H2O + lipid A-core oligosaccharideSide 1 = ADP + phosphate + lipid A-core oligosaccharideSide 2.. Involved in lipopolysaccharide (LPS) biosynthesis. Translocates lipid A-core from the inner to the outer leaflet of the inner membrane. Transmembrane domains (TMD) form a pore in the inner membrane and the ATP-binding domain (NBD) is responsible for energy generation. The protein is ATP-dependent lipid A-core flippase 1 of Colwellia psychrerythraea (strain 34H / ATCC BAA-681) (Vibrio psychroerythus).